A 357-amino-acid polypeptide reads, in one-letter code: Probable cinnamyl alcohol dehydrogenase 1 (357 aa).

Cys47 is a Zn(2+) binding site. Thr49 serves as a coordination point for NADP(+). 7 residues coordinate Zn(2+): His69, Glu70, Cys100, Cys103, Cys106, Cys114, and Cys163. NADP(+) is bound by residues Thr167, 188 to 193 (GLGGVG), 211 to 216 (SSSNKK), Thr251, Gly275, and 298 to 300 (SFI).

The protein belongs to the zinc-containing alcohol dehydrogenase family. In terms of assembly, homodimer. Requires Zn(2+) as cofactor. The N-terminus is blocked.

It catalyses the reaction (E)-cinnamyl alcohol + NADP(+) = (E)-cinnamaldehyde + NADPH + H(+). The catalysed reaction is (E)-coniferol + NADP(+) = (E)-coniferaldehyde + NADPH + H(+). It carries out the reaction (E)-sinapyl alcohol + NADP(+) = (E)-sinapaldehyde + NADPH + H(+). The enzyme catalyses (E)-4-coumaroyl alcohol + NADP(+) = (E)-4-coumaraldehyde + NADPH + H(+). It catalyses the reaction (E)-caffeyl alcohol + NADP(+) = (E)-caffeyl aldehyde + NADPH + H(+). It participates in aromatic compound metabolism; phenylpropanoid biosynthesis. Functionally, involved in lignin biosynthesis. Catalyzes the final step specific for the production of lignin monomers. Catalyzes the NADPH-dependent reduction of coniferaldehyde, 5-hydroxyconiferaldehyde, sinapaldehyde, 4-coumaraldehyde and caffeyl aldehyde to their respective alcohols. This is Probable cinnamyl alcohol dehydrogenase 1 from Nicotiana tabacum (Common tobacco).